Here is a 565-residue protein sequence, read N- to C-terminus: Phosphoenolpyruvate-protein phosphotransferase (565 aa).

The Tele-phosphohistidine intermediate role is filled by histidine 191. The phosphoenolpyruvate site is built by arginine 289 and arginine 325. Mg(2+)-binding residues include glutamate 427 and aspartate 451. Phosphoenolpyruvate contacts are provided by residues 450–451 (ND) and arginine 461. Cysteine 498 serves as the catalytic Proton donor.

Belongs to the PEP-utilizing enzyme family. Homodimer. Mg(2+) serves as cofactor.

Its subcellular location is the cytoplasm. The catalysed reaction is L-histidyl-[protein] + phosphoenolpyruvate = N(pros)-phospho-L-histidyl-[protein] + pyruvate. In terms of biological role, general (non sugar-specific) component of the phosphoenolpyruvate-dependent sugar phosphotransferase system (sugar PTS). This major carbohydrate active-transport system catalyzes the phosphorylation of incoming sugar substrates concomitantly with their translocation across the cell membrane. Enzyme I transfers the phosphoryl group from phosphoenolpyruvate (PEP) to the phosphoryl carrier protein (HPr). This is Phosphoenolpyruvate-protein phosphotransferase (ptsI) from Haloferax volcanii (strain ATCC 29605 / DSM 3757 / JCM 8879 / NBRC 14742 / NCIMB 2012 / VKM B-1768 / DS2) (Halobacterium volcanii).